The chain runs to 129 residues: Natriuretic peptides B (129 aa).

The signal sequence occupies residues 1–26 (MDPQTALSRALLLLLFLHLSLLGCRS). C107 and C123 are joined by a disulfide.

It belongs to the natriuretic peptide family. Post-translationally, the precursor molecule is proteolytically cleaved, possibly by FURIN or CORIN, to produce the active peptide. May undergo further proteolytic cleavage by various proteases such as DPP4, MME and possibly FAP, to give rise to a variety of shorter peptides. May be cleaved at Pro-99 by the prolyl endopeptidase FAP (seprase) activity (in vitro). May be degraded by IDE. During IDE degradation, the resulting products initially increase the activation of NPR1 and can also stimulate NPR2 to produce cGMP before the fragments are completely degraded and inactivated by IDE (in vitro).

It localises to the secreted. Functionally, cardiac hormone that plays a key role in mediating cardio-renal homeostasis. May also function as a paracrine antifibrotic factor in the heart. Acts by specifically binding and stimulating NPR1 to produce cGMP, which in turn activates effector proteins that drive various biological responses. Involved in regulating the extracellular fluid volume and maintaining the fluid-electrolyte balance through natriuresis, diuresis, vasorelaxation, and inhibition of renin and aldosterone secretion. Binds the clearance receptor NPR3. The chain is Natriuretic peptides B (NPPB) from Bos taurus (Bovine).